Reading from the N-terminus, the 174-residue chain is von Hippel-Lindau tumor suppressor homolog (174 aa).

Belongs to the VHL family. In terms of assembly, interacts with hif-1 (hydroxylated on 'Pro-621'); the interaction induces hif-1 degradation. May be a component of the cullin E3 ubiquitin ligase complex.

Its pathway is protein modification; protein ubiquitination. Its function is as follows. Involved in the response to variation in environmental oxygen levels by targeting the hypoxia-inducible transcription factor hif-1 for proteasomal degradation when oxygen levels are normal (around 20%). By regulating hif-1 expression, plays a role in iron homeostasis, aging, heat acclimation and progeny size. Mediates resistance to enteropathogenic E.coli. Mediates susceptibility to B.thuringiensis pore-forming toxins. Not involved in P.aeruginosa susceptibility. This Caenorhabditis elegans protein is von Hippel-Lindau tumor suppressor homolog.